Here is a 197-residue protein sequence, read N- to C-terminus: Probable molybdenum cofactor guanylyltransferase (197 aa).

GTP is bound by residues 9–11 (LAG), K21, D65, and D94. D94 lines the Mg(2+) pocket.

It belongs to the MobA family. Mg(2+) is required as a cofactor.

The protein resides in the cytoplasm. It catalyses the reaction Mo-molybdopterin + GTP + H(+) = Mo-molybdopterin guanine dinucleotide + diphosphate. Its function is as follows. Transfers a GMP moiety from GTP to Mo-molybdopterin (Mo-MPT) cofactor (Moco or molybdenum cofactor) to form Mo-molybdopterin guanine dinucleotide (Mo-MGD) cofactor. The polypeptide is Probable molybdenum cofactor guanylyltransferase (Carboxydothermus hydrogenoformans (strain ATCC BAA-161 / DSM 6008 / Z-2901)).